We begin with the raw amino-acid sequence, 148 residues long: Large ribosomal subunit protein uL15 (148 aa).

The span at 1 to 30 (MPSRLRKTRKLRGHVSHGHGRIGKHRKHPG) shows a compositional bias: basic residues. Residues 1–37 (MPSRLRKTRKLRGHVSHGHGRIGKHRKHPGGRGNAGG) are disordered. At H39 the chain carries (3S)-3-hydroxyhistidine. N6-acetyllysine occurs at positions 47 and 55. Position 68 is a phosphoserine (S68). An N6-acetyllysine modification is found at K110.

It belongs to the universal ribosomal protein uL15 family. Component of the large ribosomal subunit. Hydroxylated on His-39 by MINA.

It localises to the cytoplasm. In terms of biological role, component of the large ribosomal subunit. The ribosome is a large ribonucleoprotein complex responsible for the synthesis of proteins in the cell. This Bos taurus (Bovine) protein is Large ribosomal subunit protein uL15 (RPL27A).